A 150-amino-acid polypeptide reads, in one-letter code: C-C motif chemokine 25 (150 aa).

Residues 1–23 form the signal peptide; the sequence is MNLWLLACLVAGFLGAWAPAVHT. 2 disulfides stabilise this stretch: Cys30–Cys58 and Cys31–Cys75.

It belongs to the intercrine beta (chemokine CC) family. In terms of tissue distribution, specifically expressed by thymic dendritic cells. High levels in thymus and small intestine.

The protein resides in the secreted. Its function is as follows. Potentially involved in T-cell development. Recombinant protein shows chemotactic activity on thymocytes, macrophages, THP-1 cells, and dendritics cells but is inactive on peripheral blood lymphocytes and neutrophils. Binds to CCR9. Isoform 2 is an antagonist of isoform 1. Binds to atypical chemokine receptor ACKR4 and mediates the recruitment of beta-arrestin (ARRB1/2) to ACKR4. The polypeptide is C-C motif chemokine 25 (CCL25) (Homo sapiens (Human)).